Consider the following 290-residue polypeptide: 4-diphosphocytidyl-2-C-methyl-D-erythritol kinase (290 aa).

The active site involves K12. 97 to 107 provides a ligand contact to ATP; that stretch reads PVASGIGGGSA. Residue D139 is part of the active site.

This sequence belongs to the GHMP kinase family. IspE subfamily.

The catalysed reaction is 4-CDP-2-C-methyl-D-erythritol + ATP = 4-CDP-2-C-methyl-D-erythritol 2-phosphate + ADP + H(+). The protein operates within isoprenoid biosynthesis; isopentenyl diphosphate biosynthesis via DXP pathway; isopentenyl diphosphate from 1-deoxy-D-xylulose 5-phosphate: step 3/6. Functionally, catalyzes the phosphorylation of the position 2 hydroxy group of 4-diphosphocytidyl-2C-methyl-D-erythritol. This Parvibaculum lavamentivorans (strain DS-1 / DSM 13023 / NCIMB 13966) protein is 4-diphosphocytidyl-2-C-methyl-D-erythritol kinase.